A 147-amino-acid polypeptide reads, in one-letter code: Cytochrome c oxidase subunit 3 (147 aa).

A run of 4 helical transmembrane segments spans residues 13 to 33 (FQIPLLNTIILISSGVSVTWA), 48 to 68 (GLFITIILGIYFTILQAYEYF), 83 to 103 (FFMATGFHGLHVIIGTLFLLI), and 125 to 145 (AWYWHFVDVVWLFLYISIYWW).

Belongs to the cytochrome c oxidase subunit 3 family. In terms of assembly, component of the cytochrome c oxidase (complex IV, CIV), a multisubunit enzyme composed of a catalytic core of 3 subunits and several supernumerary subunits. The complex exists as a monomer or a dimer and forms supercomplexes (SCs) in the inner mitochondrial membrane with ubiquinol-cytochrome c oxidoreductase (cytochrome b-c1 complex, complex III, CIII).

The protein localises to the mitochondrion inner membrane. The catalysed reaction is 4 Fe(II)-[cytochrome c] + O2 + 8 H(+)(in) = 4 Fe(III)-[cytochrome c] + 2 H2O + 4 H(+)(out). Functionally, component of the cytochrome c oxidase, the last enzyme in the mitochondrial electron transport chain which drives oxidative phosphorylation. The respiratory chain contains 3 multisubunit complexes succinate dehydrogenase (complex II, CII), ubiquinol-cytochrome c oxidoreductase (cytochrome b-c1 complex, complex III, CIII) and cytochrome c oxidase (complex IV, CIV), that cooperate to transfer electrons derived from NADH and succinate to molecular oxygen, creating an electrochemical gradient over the inner membrane that drives transmembrane transport and the ATP synthase. Cytochrome c oxidase is the component of the respiratory chain that catalyzes the reduction of oxygen to water. Electrons originating from reduced cytochrome c in the intermembrane space (IMS) are transferred via the dinuclear copper A center (CU(A)) of subunit 2 and heme A of subunit 1 to the active site in subunit 1, a binuclear center (BNC) formed by heme A3 and copper B (CU(B)). The BNC reduces molecular oxygen to 2 water molecules using 4 electrons from cytochrome c in the IMS and 4 protons from the mitochondrial matrix. In Spodoptera frugiperda (Fall armyworm), this protein is Cytochrome c oxidase subunit 3 (COIII).